The primary structure comprises 342 residues: N-acetyl-gamma-glutamyl-phosphate reductase (342 aa).

C147 is a catalytic residue.

The protein belongs to the NAGSA dehydrogenase family. Type 1 subfamily.

It localises to the cytoplasm. The catalysed reaction is N-acetyl-L-glutamate 5-semialdehyde + phosphate + NADP(+) = N-acetyl-L-glutamyl 5-phosphate + NADPH + H(+). Its pathway is amino-acid biosynthesis; L-arginine biosynthesis; N(2)-acetyl-L-ornithine from L-glutamate: step 3/4. Catalyzes the NADPH-dependent reduction of N-acetyl-5-glutamyl phosphate to yield N-acetyl-L-glutamate 5-semialdehyde. The chain is N-acetyl-gamma-glutamyl-phosphate reductase from Campylobacter jejuni subsp. doylei (strain ATCC BAA-1458 / RM4099 / 269.97).